Reading from the N-terminus, the 859-residue chain is Leucine--tRNA ligase (859 aa).

Residues Pro-42–His-52 carry the 'HIGH' region motif. Positions Lys-618–Ser-622 match the 'KMSKS' region motif. Lys-621 serves as a coordination point for ATP.

It belongs to the class-I aminoacyl-tRNA synthetase family.

It localises to the cytoplasm. The catalysed reaction is tRNA(Leu) + L-leucine + ATP = L-leucyl-tRNA(Leu) + AMP + diphosphate. This is Leucine--tRNA ligase from Buchnera aphidicola subsp. Acyrthosiphon pisum (strain APS) (Acyrthosiphon pisum symbiotic bacterium).